The sequence spans 163 residues: MPTDDPSDRPSGLLDQLSRLIETLAELDDDNGEQHGHSTIDRGRTRIDYDYAVSIGLGSDARSPSTPAGNADDAGDAETAHIETRASDDSDDLVVVADLPGVTDETAVDAAVEDTGALTISVGDDVVERLTLDDPGMTITSLTVTNQILELRVTPSEPSATDT.

The disordered stretch occupies residues 57–92 (LGSDARSPSTPAGNADDAGDAETAHIETRASDDSDD). A compositionally biased stretch (basic and acidic residues) spans 78-88 (ETAHIETRASD).

The protein belongs to the gas vesicle GvpH family. In terms of assembly, gvpF to GvpM interact with each other in vitro, and may form multi-subunit complex(es). Interacts with GvpC. Might interact with GvpA.

It is found in the gas vesicle. It localises to the cytoplasm. In terms of biological role, a minor component of the gas vesicle, also found in soluble extracts. Proteins GvpF to GvpM might be involved in nucleating gas vesicle formation. Gas vesicles are hollow, gas filled proteinaceous nanostructures found in several microbial planktonic microorganisms. They allow positioning of halobacteria at the optimal depth for growth in the poorly aerated, shallow brine pools of their habitat. Expression of 2 c-vac DNA fragments containing 2 divergently transcribed regions (gvpE-gvpF-gvpG-gvpH-gvpI-gvpJ-gvpK-gvpL-gvpM and gvpA-gvpC-gvpN-gvpO) allows H.volcanii to produce gas vesicles. The polypeptide is Gas vesicle protein H2 (Halobacterium salinarum (strain ATCC 700922 / JCM 11081 / NRC-1) (Halobacterium halobium)).